Consider the following 677-residue polypeptide: Beta-galactosidase (677 aa).

The signal sequence occupies residues 1–23 (MPGFLVRILPLLLVLLLLGPTRG). Positions 24 to 28 (LRNAT) are excised as a propeptide. N-linked (GlcNAc...) asparagine glycosylation occurs at asparagine 26. Substrate contacts are provided by tyrosine 83, glutamate 129, and asparagine 187. The Proton donor role is filled by glutamate 188. The cysteines at positions 195 and 230 are disulfide-linked. Residue asparagine 247 is glycosylated (N-linked (GlcNAc...) asparagine). Glutamate 268 functions as the Nucleophile in the catalytic mechanism. Tyrosine 333 contributes to the substrate binding site. Asparagine 464, asparagine 498, asparagine 542, asparagine 545, and asparagine 555 each carry an N-linked (GlcNAc...) asparagine glycan. A disulfide bridge connects residues cysteine 626 and cysteine 634. Residues 650–677 (YDHPSKPVEKRLMPPPPQKNKDSWLDHV) form a disordered region. Basic and acidic residues-rich tracts occupy residues 652-661 (HPSKPVEKRL) and 668-677 (KNKDSWLDHV).

Belongs to the glycosyl hydrolase 35 family. As to quaternary structure, homodimer. May form higher multimers. Detected in placenta (at protein level). Detected in fibroblasts and testis.

It is found in the lysosome. It localises to the cytoplasm. The protein localises to the perinuclear region. The enzyme catalyses Hydrolysis of terminal non-reducing beta-D-galactose residues in beta-D-galactosides.. Functionally, cleaves beta-linked terminal galactosyl residues from gangliosides, glycoproteins, and glycosaminoglycans. Its function is as follows. Has no beta-galactosidase catalytic activity, but plays functional roles in the formation of extracellular elastic fibers (elastogenesis) and in the development of connective tissue. Seems to be identical to the elastin-binding protein (EBP), a major component of the non-integrin cell surface receptor expressed on fibroblasts, smooth muscle cells, chondroblasts, leukocytes, and certain cancer cell types. In elastin producing cells, associates with tropoelastin intracellularly and functions as a recycling molecular chaperone which facilitates the secretions of tropoelastin and its assembly into elastic fibers. The protein is Beta-galactosidase (GLB1) of Homo sapiens (Human).